The chain runs to 73 residues: Antimicrobial peptide 143 (73 aa).

The first 22 residues, 1–22, serve as a signal peptide directing secretion; that stretch reads MKVKCLLAVFLIVLIAAEHCQA. A Lysine amide modification is found at lysine 38. Positions 44-73 are excised as a propeptide; it reads ELGTQFRPQQKNFMRREIDLERLFAEMPDY.

This sequence belongs to the non-disulfide-bridged peptide (NDBP) superfamily. Short antimicrobial peptide (group 4) family. Expressed by the venom gland.

The protein localises to the secreted. The protein resides in the target cell membrane. Functionally, cationic host defense peptide that have antibacterial activity by breaking membranes. Is more effective on Gram-positive than on Gram-negative bacteria. This chain is Antimicrobial peptide 143, found in Lychas mucronatus (Chinese swimming scorpion).